The following is a 389-amino-acid chain: MAYFNDIAPIKYEGTKTKNMFAFRHYNPEEVVAGKTMEEQLHFALAFWHTITMDGADPFGSATMERPWDLEGGSELDRAHRRVDAFFEIAEKLGVKYYCFHDIDIAPTGNSLKEFYANLDEITDHLLEKQKETGIKLLWNTANMFSNPRYMNGVSTSNRAEVFAYGAAQVKKGLELSKKLGGENYVFWGGREGYESLLNTDMGLEMDHMAKFFHLAIDYAKSINHLPIFLIELKPKEPMTHQYDFDAATALAFLQKYDLDKYFKLNIETNHAWLAGHTFEHELNTARTFGALGSIDANQGNYLLGWDTDEFPTLVIDITLQGWILMHVRLKVQQPSLKTNSCLISLKNVIVHTRRQKLVNLSKMEQQLLKVLLLMLLSMGMTSNLILTT.

Catalysis depends on residues His-101 and Asp-104. Positions 232, 268, 271, 296, 307, and 309 each coordinate Mg(2+).

The protein belongs to the xylose isomerase family. In terms of assembly, homotetramer. Mg(2+) is required as a cofactor.

The protein resides in the cytoplasm. It carries out the reaction alpha-D-xylose = alpha-D-xylulofuranose. This chain is Xylose isomerase, found in Lactococcus lactis subsp. cremoris (strain SK11).